Consider the following 255-residue polypeptide: tRNA (guanine-N(7)-)-methyltransferase (255 aa).

The segment covering 1–11 has biased composition (basic and acidic residues); it reads MSISDNSRDQL. The segment at 1–25 is disordered; that stretch reads MSISDNSRDQLGELPAGRPLQSDFD. Residues Glu-83, Glu-108, Asp-135, and Asp-158 each contribute to the S-adenosyl-L-methionine site. Asp-158 is an active-site residue. Lys-162 lines the substrate pocket. The interval 164 to 169 is interaction with RNA; it reads RHNKRR. Substrate contacts are provided by residues Asp-194 and 232–235; that span reads TKFE.

This sequence belongs to the class I-like SAM-binding methyltransferase superfamily. TrmB family.

The catalysed reaction is guanosine(46) in tRNA + S-adenosyl-L-methionine = N(7)-methylguanosine(46) in tRNA + S-adenosyl-L-homocysteine. It functions in the pathway tRNA modification; N(7)-methylguanine-tRNA biosynthesis. Functionally, catalyzes the formation of N(7)-methylguanine at position 46 (m7G46) in tRNA. The polypeptide is tRNA (guanine-N(7)-)-methyltransferase (Corynebacterium glutamicum (strain ATCC 13032 / DSM 20300 / JCM 1318 / BCRC 11384 / CCUG 27702 / LMG 3730 / NBRC 12168 / NCIMB 10025 / NRRL B-2784 / 534)).